The sequence spans 166 residues: uncharacterized protein (166 aa).

A run of 3 helical transmembrane segments spans residues 4 to 24 (LNIF…EASI), 101 to 121 (LITC…SEAI), and 146 to 166 (SWSS…QCFL).

The protein localises to the membrane. This is an uncharacterized protein from Saccharomyces cerevisiae (strain ATCC 204508 / S288c) (Baker's yeast).